The primary structure comprises 330 residues: Mitochondrial glycine transporter (330 aa).

Solcar repeat units follow at residues 11–94, 122–206, and 234–318; these read SSSY…LRQN, LSNL…LKKR, and TSAS…LIRR. 6 helical membrane-spanning segments follow: residues 17-42, 69-95, 128-153, 181-204, 238-264, and 293-311; these read FTAGLGSGILSAVLLQPADLLKTRLQ, GTVPSALRTGFGSAIYFTSLNALRQNV, LTTGAVARAGAGFVLMPMTIIKVRYE, GFGATAIRDAPYAGLYVLFYEQLK, INFGSGVLAAGLATAITNPFDAIKTRI, and GLGLRMGRKAVSSALAWTI.

Belongs to the mitochondrial carrier (TC 2.A.29) family. SLC25A38 subfamily.

It localises to the mitochondrion inner membrane. It catalyses the reaction glycine(in) = glycine(out). Functionally, mitochondrial glycine transporter that imports glycine into the mitochondrial matrix. Plays an important role in providing glycine for the first enzymatic step in heme biosynthesis, the condensation of glycine with succinyl-CoA to produce 5-aminolevulinate (ALA) in the mitochondrial matrix. The protein is Mitochondrial glycine transporter of Sclerotinia sclerotiorum (strain ATCC 18683 / 1980 / Ss-1) (White mold).